The sequence spans 129 residues: Copper chaperone GriE (129 aa).

The tat-type signal signal peptide spans 1 to 37; it reads MPMNRREMVMATTGAALAAAAAVPLLSGGEGEGAAEA. Residues 32–51 are disordered; sequence EGAAEAAAAPAKATGRGREH. Positions 34 to 45 are enriched in low complexity; the sequence is AAEAAAAPAKAT.

It belongs to the melC1 family. Post-translationally, predicted to be exported by the Tat system. The position of the signal peptide cleavage has not been experimentally proven.

Its function is as follows. Involved in the transfer of Cu(2+) ions to the apo form of o-aminophenol oxidase GriF in the grixazone biosynthetic pathway. This Streptomyces griseus subsp. griseus (strain JCM 4626 / CBS 651.72 / NBRC 13350 / KCC S-0626 / ISP 5235) protein is Copper chaperone GriE (griE).